The sequence spans 333 residues: METYEKIELGIIVIILLILIESVILMTVEGWDFFTAFYTAVVTISTVGYGDYTPQTFLGKLSVIIYIFAGVGAVAYTMGNIASFFIEGHFRKYFRLRKMMDRIKKLNNHYIICGYGRLGKVIAEEFKKCNIPFVIIDSDEKLLEEALEKDPNLICIVGDATSDDILKKAKIEKAKGLISVVSSDAENVFITLSAKKLNPNIYIVAKAEKPSTLDKLIKAGADRAVCPYIVGGMEIARIAINPDIVEFIHSLVATEEDMEVRRYIVKNKELDNKLLKDSGIREKTGATILAVKKGDKTITSPPPDTVINIGDIIYAFGTKEQLEKLKRYVEGVE.

The Cytoplasmic portion of the chain corresponds to 1–6 (METYEK). The chain crosses the membrane as a helical span at residues 7 to 27 (IELGIIVIILLILIESVILMT). At 28–60 (VEGWDFFTAFYTAVVTISTVGYGDYTPQTFLGK) the chain is on the extracellular side. The short motif at 46 to 51 (TVGYGD) is the Selectivity filter element. A helical transmembrane segment spans residues 61-81 (LSVIIYIFAGVGAVAYTMGNI). The Cytoplasmic segment spans residues 82–333 (ASFFIEGHFR…KLKRYVEGVE (252 aa)). The RCK N-terminal domain occupies 107 to 229 (NNHYIICGYG…GADRAVCPYI (123 aa)). One can recognise an RCK C-terminal domain in the interval 246 to 331 (EFIHSLVATE…LEKLKRYVEG (86 aa)).

As to quaternary structure, homotetramer.

The protein localises to the cell membrane. Its function is as follows. Potassium channel protein. Seems to conduct potassium at low membrane potentials. The chain is Potassium channel protein 1 from Methanocaldococcus jannaschii (strain ATCC 43067 / DSM 2661 / JAL-1 / JCM 10045 / NBRC 100440) (Methanococcus jannaschii).